We begin with the raw amino-acid sequence, 431 residues long: 3-deoxy-D-manno-octulosonic acid transferase (431 aa).

Residues 5–27 traverse the membrane as a helical; Signal-anchor segment; that stretch reads WLTSRLYDAFLVCAFFVSAPRIF. Catalysis depends on E67, which acts as the Proton acceptor. CMP contacts are provided by residues 275–276, 315–317, and 342–345; these read PR, MGV, and NLLE.

Belongs to the glycosyltransferase group 1 family. Glycosyltransferase 30 subfamily.

The protein localises to the cell inner membrane. The enzyme catalyses lipid IVA (E. coli) + CMP-3-deoxy-beta-D-manno-octulosonate = alpha-Kdo-(2-&gt;6)-lipid IVA (E. coli) + CMP + H(+). It catalyses the reaction alpha-Kdo-(2-&gt;6)-lipid IVA (E. coli) + CMP-3-deoxy-beta-D-manno-octulosonate = alpha-Kdo-(2-&gt;4)-alpha-Kdo-(2-&gt;6)-lipid IVA (E. coli) + CMP + H(+). The catalysed reaction is alpha-Kdo-(2-&gt;4)-alpha-Kdo-(2-&gt;6)-lipid IVA (E. coli) + CMP-3-deoxy-beta-D-manno-octulosonate = alpha-Kdo-(2-&gt;8)-alpha-Kdo-(2-&gt;4)-alpha-Kdo-(2-&gt;6)-lipid IVA (E. coli) + CMP + H(+). It participates in bacterial outer membrane biogenesis; LPS core biosynthesis. Functionally, involved in lipopolysaccharide (LPS) biosynthesis. Catalyzes the transfer of three 3-deoxy-D-manno-octulosonate (Kdo) residues from CMP-Kdo to lipid IV(A), the tetraacyldisaccharide-1,4'-bisphosphate precursor of lipid A. Thus generates the genus-specific LPS epitope of Chlamydia, composed of the trisaccharide alpha-Kdo-(2-&gt;8)-alpha-Kdo-(2-&gt;4)-alpha-Kdo. This Chlamydia trachomatis serovar A (strain ATCC VR-571B / DSM 19440 / HAR-13) protein is 3-deoxy-D-manno-octulosonic acid transferase (waaA).